The chain runs to 957 residues: Glycine dehydrogenase (decarboxylating) (957 aa).

N6-(pyridoxal phosphate)lysine is present on lysine 708.

This sequence belongs to the GcvP family. In terms of assembly, the glycine cleavage system is composed of four proteins: P, T, L and H. Pyridoxal 5'-phosphate serves as cofactor.

It catalyses the reaction N(6)-[(R)-lipoyl]-L-lysyl-[glycine-cleavage complex H protein] + glycine + H(+) = N(6)-[(R)-S(8)-aminomethyldihydrolipoyl]-L-lysyl-[glycine-cleavage complex H protein] + CO2. In terms of biological role, the glycine cleavage system catalyzes the degradation of glycine. The P protein binds the alpha-amino group of glycine through its pyridoxal phosphate cofactor; CO(2) is released and the remaining methylamine moiety is then transferred to the lipoamide cofactor of the H protein. In Escherichia coli (strain SE11), this protein is Glycine dehydrogenase (decarboxylating).